Consider the following 149-residue polypeptide: UPF0208 membrane protein VSAL_I2111 (149 aa).

Helical transmembrane passes span 41–61 (FAVK…MVFN) and 69–89 (SIII…WLGN).

Belongs to the UPF0208 family.

Its subcellular location is the cell inner membrane. This is UPF0208 membrane protein VSAL_I2111 from Aliivibrio salmonicida (strain LFI1238) (Vibrio salmonicida (strain LFI1238)).